Here is a 907-residue protein sequence, read N- to C-terminus: Collagen alpha-2(I) chain (907 aa).

Disordered regions lie at residues 1-183 (GPMG…GIPG) and 199-907 (IPGP…PGPS). The span at 19-33 (AGEDGHPGKPGRERG) shows a compositional bias: basic and acidic residues. 3 stretches are compositionally biased toward low complexity: residues 101 to 130 (VGAP…SAGP), 155 to 169 (AGPR…VSGP), and 206 to 221 (PGPV…RGIV). At Asn260 the chain carries Deamidated asparagine. At Pro272 the chain carries 4-hydroxyproline. 8 stretches are compositionally biased toward low complexity: residues 272–281 (PGIRGSRGIP), 292–307 (PPGS…VRGP), 340–362 (PAGI…RGEP), 424–441 (PGES…SRGP), 453–475 (EPGV…PGER), 495–507 (APGA…PAGA), 535–555 (VGPA…QPGA), and 566–581 (NGPV…AGPA). Gly residues predominate over residues 591–600 (GSRGDGGPPG). 5 stretches are compositionally biased toward low complexity: residues 601–611 (ATGFPGAAGRT), 664–691 (EAGT…IPGS), 706–745 (EPGP…NPGN), 756–766 (NSGPVGAAGAP), and 783–804 (EPGP…PSGP). Residues 808-819 (RGDKGEPGDKGP) show a composition bias toward basic and acidic residues. Positions 892–907 (AGPPGPPGPPGPPGPS) are enriched in pro residues.

It belongs to the fibrillar collagen family. As to quaternary structure, trimers of one alpha 2(I) and two alpha 1(I) chains. Interacts (via C-terminus) with TMEM131 (via PapD-L domain); the interaction is direct and is involved in assembly and TRAPPIII ER-to-Golgi transport complex-dependent secretion of collagen. Post-translationally, prolines at the third position of the tripeptide repeating unit (G-X-Y) are hydroxylated in some or all of the chains. As to expression, forms the fibrils of tendon, ligaments and bones. In bones, the fibrils are mineralized with calcium hydroxyapatite.

The protein resides in the secreted. The protein localises to the extracellular space. It is found in the extracellular matrix. Type I collagen is a member of group I collagen (fibrillar forming collagen). This is Collagen alpha-2(I) chain from Macrauchenia sp.